The following is a 131-amino-acid chain: Profilin-5 (131 aa).

The protein belongs to the profilin family. Occurs in many kinds of cells as a complex with monomeric actin in a 1:1 ratio.

Its subcellular location is the cytoplasm. It localises to the cytoskeleton. Binds to actin and affects the structure of the cytoskeleton. At high concentrations, profilin prevents the polymerization of actin, whereas it enhances it at low concentrations. By binding to PIP2, it inhibits the formation of IP3 and DG. This chain is Profilin-5, found in Hevea brasiliensis (Para rubber tree).